Here is a 160-residue protein sequence, read N- to C-terminus: Cytochrome b6-f complex subunit 4 (160 aa).

3 helical membrane passes run 36–56, 95–115, and 131–151; these read LLYI…GLAV, LLGV…PFLE, and TVFL…TLPI.

Belongs to the cytochrome b family. PetD subfamily. The 4 large subunits of the cytochrome b6-f complex are cytochrome b6, subunit IV (17 kDa polypeptide, petD), cytochrome f and the Rieske protein, while the 4 small subunits are petG, petL, petM and petN. The complex functions as a dimer.

The protein localises to the plastid. It localises to the chloroplast thylakoid membrane. In terms of biological role, component of the cytochrome b6-f complex, which mediates electron transfer between photosystem II (PSII) and photosystem I (PSI), cyclic electron flow around PSI, and state transitions. This is Cytochrome b6-f complex subunit 4 from Arabidopsis thaliana (Mouse-ear cress).